The primary structure comprises 248 residues: Ubiquinone/menaquinone biosynthesis C-methyltransferase UbiE (248 aa).

S-adenosyl-L-methionine is bound by residues serine 68 and aspartate 92.

This sequence belongs to the class I-like SAM-binding methyltransferase superfamily. MenG/UbiE family.

The enzyme catalyses a 2-demethylmenaquinol + S-adenosyl-L-methionine = a menaquinol + S-adenosyl-L-homocysteine + H(+). It carries out the reaction a 2-methoxy-6-(all-trans-polyprenyl)benzene-1,4-diol + S-adenosyl-L-methionine = a 5-methoxy-2-methyl-3-(all-trans-polyprenyl)benzene-1,4-diol + S-adenosyl-L-homocysteine + H(+). The protein operates within quinol/quinone metabolism; menaquinone biosynthesis; menaquinol from 1,4-dihydroxy-2-naphthoate: step 2/2. It participates in cofactor biosynthesis; ubiquinone biosynthesis. Functionally, methyltransferase required for the conversion of demethylmenaquinol (DMKH2) to menaquinol (MKH2) and the conversion of 2-polyprenyl-6-methoxy-1,4-benzoquinol (DDMQH2) to 2-polyprenyl-3-methyl-6-methoxy-1,4-benzoquinol (DMQH2). The protein is Ubiquinone/menaquinone biosynthesis C-methyltransferase UbiE of Rickettsia africae (strain ESF-5).